The following is an 864-amino-acid chain: MHERYVPADVEAAAQGDWRAADAYKTKEDSQKPKFYCVSMLPYPSGKLHMGHVRNYTINDVMYRYLRMNGYNTLMPMGWDAFGMPAENAAMANGVPPAKWTYDNIDYMKGQMQSMGLAIDWSREIATCKPDYYKWNQWLFLKMLEKGIAYKKTGTVNWDPVDQTVLANEQVIDGRGWRSGALVEKREIPMYYLRITQYADELLNDLDGLGWPERVKIMQQNWIGKSFGVNFGFPYELDGEKALLRVFTTRADTIMGVTFCAIAAEHPLATRLAQGKPELQAFIDECKRGGVAEADVATMEKKGIATGFSVTHPLTGEAVEVWIGNYVLMSYGEGAVMGVPGHDERDFAFAKKYGLPIKQVIAAEGQTYSLDAWQEWYGDKDAAVCVNSGKYDGLRYTEAVDAVAADLKAGGFGDKQVTWRLRDWGVSRQRYWGTPIPIIHCPSCGDVPVPEQDLPVVLPEDLVPDGTGNPLAKSEAFLNCTCPKCGAAAKRETDTMDTFVDSSWYFSRYTAPDADTMVDARTDYWMPMDQYIGGIEHAILHLLYSRFWTKVMRDLGLVKFGEPAKNLLTQGMVLNETYYREDATGKKTWYNPADVTVTHDDKGRPVGATLNADGQPVVLGGIEKMSKSKNNGVDPQVLIDQYGADTARLFTMFAAPPEQQLEWSGAGVEGASRFLRRVWSFGAGNREALAARAGFDAASLGDADKALRREIYSVLKQADFDYQRLQYNTVVSAAMKMLNAIDGAKGATPGVLRETYGVLLRVLYPVVPHVTFELWKALGYADEFGPLLDAPWPKVDEAALEQAEIELVLQVNGKVRGALKVAKDATREAIEVAAVADEAFAKFSDGKPAKKIVVVPGRLVNIVV.

Residues 42-52 (PYPSGKLHMGH) carry the 'HIGH' region motif. The 'KMSKS' region signature appears at 624 to 628 (KMSKS). Residue lysine 627 coordinates ATP.

This sequence belongs to the class-I aminoacyl-tRNA synthetase family.

It localises to the cytoplasm. It catalyses the reaction tRNA(Leu) + L-leucine + ATP = L-leucyl-tRNA(Leu) + AMP + diphosphate. This chain is Leucine--tRNA ligase, found in Burkholderia vietnamiensis (strain G4 / LMG 22486) (Burkholderia cepacia (strain R1808)).